The primary structure comprises 395 residues: Phosphoprotein (395 aa).

Disordered stretches follow at residues 34 to 104 (VGRS…ADEA), 126 to 179 (NKSS…GTDA), and 192 to 214 (LSAG…PAPV). The span at 65–74 (TPDRQDRSDK) shows a compositional bias: basic and acidic residues. Polar residues-rich tracts occupy residues 89–98 (PATSTDQPPT) and 147–178 (PTQQ…QGTD). Residues 222 to 285 (DFVQAMMSMM…LGMMKILDPG (64 aa)) are multimerization.

Belongs to the rubulavirus/avulavirus P protein family. Homotetramer. Interacts (via multimerization domain) with polymerase L; this interaction forms the polymerase L-P complex. Interacts (via N-terminus) with N0 (via Ncore); this interaction allows P to chaperon N0 to avoid N polymerization before encapsidation. Interacts (via C-terminus) with N-RNA template; this interaction positions the polymerase on the template for both transcription and replication.

Functionally, essential cofactor of the RNA polymerase L that plays a central role in the transcription and replication by forming the polymerase complex with RNA polymerase L and recruiting L to the genomic N-RNA template for RNA synthesis. Also plays a central role in the encapsidation of nascent RNA chains by forming the encapsidation complex with the nucleocapsid protein N (N-P complex). Acts as a chaperone for newly synthesized free N protein, so-called N0, allowing encapsidation of nascent RNA chains during replication. The nucleoprotein protein N prevents excessive phosphorylation of P, which leads to down-regulation of viral transcription/ replication. Participates, together with N, in the formation of viral factories (viroplasms), which are large inclusions in the host cytoplasm where replication takes place. The protein is Phosphoprotein (P/V) of Newcastle disease virus (strain Ulster/2C) (NDV).